The sequence spans 102 residues: Cytochrome c oxidase subunit 6a, mitochondrial (102 aa).

A mitochondrion-targeting transit peptide spans 1–36 (MATAIVRSALSRAVTRAAPKTSVAPKRNFSSSAGHD).

It belongs to the cytochrome c oxidase subunit 6A (TC 3.D.4.11) family.

The protein localises to the mitochondrion inner membrane. In terms of biological role, this protein is one of the nuclear-coded polypeptide chains of cytochrome c oxidase, the terminal oxidase in mitochondrial electron transport. This Arabidopsis thaliana (Mouse-ear cress) protein is Cytochrome c oxidase subunit 6a, mitochondrial (COX6A).